The sequence spans 353 residues: S-adenosylmethionine:tRNA ribosyltransferase-isomerase (353 aa).

It belongs to the QueA family. As to quaternary structure, monomer.

The protein localises to the cytoplasm. It catalyses the reaction 7-aminomethyl-7-carbaguanosine(34) in tRNA + S-adenosyl-L-methionine = epoxyqueuosine(34) in tRNA + adenine + L-methionine + 2 H(+). It functions in the pathway tRNA modification; tRNA-queuosine biosynthesis. Transfers and isomerizes the ribose moiety from AdoMet to the 7-aminomethyl group of 7-deazaguanine (preQ1-tRNA) to give epoxyqueuosine (oQ-tRNA). In Dinoroseobacter shibae (strain DSM 16493 / NCIMB 14021 / DFL 12), this protein is S-adenosylmethionine:tRNA ribosyltransferase-isomerase.